Here is a 212-residue protein sequence, read N- to C-terminus: Orotate phosphoribosyltransferase (212 aa).

Lys26 provides a ligand contact to 5-phospho-alpha-D-ribose 1-diphosphate. 34-35 (FF) is an orotate binding site. Residues 72 to 73 (YK), Arg98, Lys99, Lys102, His104, and 123 to 131 (DDVITAGTA) each bind 5-phospho-alpha-D-ribose 1-diphosphate. Thr127 and Arg155 together coordinate orotate.

This sequence belongs to the purine/pyrimidine phosphoribosyltransferase family. PyrE subfamily. In terms of assembly, homodimer. Requires Mg(2+) as cofactor.

It carries out the reaction orotidine 5'-phosphate + diphosphate = orotate + 5-phospho-alpha-D-ribose 1-diphosphate. It participates in pyrimidine metabolism; UMP biosynthesis via de novo pathway; UMP from orotate: step 1/2. In terms of biological role, catalyzes the transfer of a ribosyl phosphate group from 5-phosphoribose 1-diphosphate to orotate, leading to the formation of orotidine monophosphate (OMP). The chain is Orotate phosphoribosyltransferase from Marinobacter nauticus (strain ATCC 700491 / DSM 11845 / VT8) (Marinobacter aquaeolei).